The following is a 429-amino-acid chain: Xyloglucan O-acetyltransferase 1 (429 aa).

Residues 1–20 (MGSPFKDHHHHHHPFSLAKK) lie on the Cytoplasmic side of the membrane. The chain crosses the membrane as a helical; Signal-anchor for type II membrane protein span at residues 21–41 (LIPWTFYAMIPLVLFRLYFYP). Residues 42 to 429 (YPLHNITTPI…KWDYESRREE (388 aa)) lie on the Lumenal side of the membrane. N-linked (GlcNAc...) asparagine glycans are attached at residues N46 and N89. Cystine bridges form between C72-C122, C93-C158, C102-C402, and C317-C398. Residues 145 to 147 (GDS) carry the GDS motif motif. S147 acts as the Nucleophile in catalysis. Residues N189, N263, and N351 are each glycosylated (N-linked (GlcNAc...) asparagine). Catalysis depends on D397, which acts as the Proton donor. The short motif at 397-400 (DCVH) is the DXXH motif element. Catalysis depends on H400, which acts as the Proton acceptor.

Belongs to the PC-esterase family. TBL subfamily.

It is found in the golgi apparatus membrane. Xyloglucan acetyltransferase that catalyzes the acetylation of fucosylated Gal residues on xyloglucan side chains. Predominantly catalyze 6-O-monoacetylation of Gal residues in the Fuc-Gal-Xyl trisaccharide side chains of xyloglucan oligomers. This Populus trichocarpa (Western balsam poplar) protein is Xyloglucan O-acetyltransferase 1.